We begin with the raw amino-acid sequence, 738 residues long: Protein Aster-B (738 aa).

The tract at residues 1 to 81 (MKGFKLSCTA…SGGKNSKKSQ (81 aa)) is disordered. The segment covering 8 to 19 (CTASNSNRSTPA) has biased composition (polar residues). S28 and S30 each carry phosphoserine. The span at 41-51 (MVEKGSDHSSD) shows a compositional bias: basic and acidic residues. Residues 59–70 (QGVQRSCSSQSG) are compositionally biased toward low complexity. In terms of domain architecture, GRAM spans 96–163 (EDFRKLFKQL…KDICSMTKEK (68 aa)). Positions 254–299 (EENEVNDSSSKSSIETKPDASPQLPKKSITNSTLTSTGSSEAPVSF) are disordered. The segment covering 259–268 (NDSSSKSSIE) has biased composition (polar residues). S274 is modified (phosphoserine). The span at 281–295 (SITNSTLTSTGSSEA) shows a compositional bias: polar residues. In terms of domain architecture, VASt spans 372–543 (SGRQYVNEVF…ELTKTESTYL (172 aa)). A Phosphotyrosine modification is found at Y389. Phosphoserine is present on residues S550 and S581. 3 positions are modified to phosphothreonine: T584, T585, and T587. A helical transmembrane segment spans residues 623–643 (LLLVISCVICFSLVLLVVLNM).

As to expression, highly expressed in the adrenal gland (at protein level) and brain. Also found in the kidney, testis and macrophages.

It is found in the endoplasmic reticulum membrane. The protein localises to the cell membrane. Cholesterol transporter that mediates non-vesicular transport of cholesterol from the plasma membrane (PM) to the endoplasmic reticulum (ER). Contains unique domains for binding cholesterol and the PM, thereby serving as a molecular bridge for the transfer of cholesterol from the PM to the ER. Plays a crucial role in cholesterol homeostasis in the adrenal gland and has the unique ability to localize to the PM based on the level of membrane cholesterol. In lipid-poor conditions localizes to the ER membrane and in response to excess cholesterol in the PM is recruited to the endoplasmic reticulum-plasma membrane contact sites (EPCS) which is mediated by the GRAM domain. At the EPCS, the sterol-binding VASt/ASTER domain binds to the cholesterol in the PM and facilitates its transfer from the PM to ER. In Mus musculus (Mouse), this protein is Protein Aster-B (Gramd1b).